A 496-amino-acid chain; its full sequence is Cyclin-dependent kinase 16 (496 aa).

Residues 1 to 95 (MDRMKKIKRQ…SATSSDEVQS (95 aa)) form a disordered region. Ser12 carries the phosphoserine; by BRSK2 modification. Phosphoserine is present on residues Ser36, Ser42, Ser64, Ser65, Ser78, Ser82, and Ser89. The segment covering 69 to 78 (IVHEDMKMGS) has biased composition (basic and acidic residues). The segment covering 83-93 (DQASATSSDEV) has biased composition (polar residues). Position 95 is a phosphoserine; by CDK5 (Ser95). Phosphoserine occurs at positions 110, 119, 138, 146, 153, and 155. Residues 165–446 (YIKLDKLGEG…AEDARKHPFF (282 aa)) enclose the Protein kinase domain. ATP is bound by residues 171-179 (LGEGTYATV) and Lys194. Position 175 is a phosphothreonine (Thr175). Asp286 (proton acceptor) is an active-site residue. At Thr380 the chain carries Phosphothreonine. Ser391, Ser478, and Ser480 each carry phosphoserine.

It belongs to the protein kinase superfamily. CMGC Ser/Thr protein kinase family. CDC2/CDKX subfamily. As to quaternary structure, found in a complex containing CABLES1, CDK17 and TDRD7. Interacts with BRSK2. Identified in a complex with NSF, syntaxin-1, synaptotagmin, SYN1, SYP and CDK5R1. Interacts with YWHAH, YWHAQ and YWHAZ. Interacts with CCNY; this interaction increases the CDK16 kinase activity. Interacts with CCNYL1; this interaction mutually increases the stability of CDK16 and CCNYL1 and increases the kinase activity of CDK16. Interacts with NSF. Phosphorylation of CDK16 is essential for the binding of CCNY, but also essential for the regulation of CDK16 kinase activity. Phosphorylation of CDK16 is essential for the binding of CCNYl1, but also essential for the regulation of CDK16 kinase activity. Ser-146 and Ser-153 are the critical sites for the binding of CCNYL1 and for modulating CDK16 kinase activity. Phosphorylation at Ser-153 inhibits kinase activity. In terms of tissue distribution, highly expressed in testis and brain, and detected at lower levels in heart, skeletal muscle, adipose tissue, lung, spleen and pancreas (at protein level). Ubiquitous with highest levels in testis and brain, with longer form predominant in all tissues except the testis.

The protein resides in the cytoplasm. It is found in the cytoplasmic vesicle. Its subcellular location is the secretory vesicle. The protein localises to the cell membrane. It localises to the synapse. The protein resides in the synaptosome. The catalysed reaction is L-seryl-[protein] + ATP = O-phospho-L-seryl-[protein] + ADP + H(+). The enzyme catalyses L-threonyl-[protein] + ATP = O-phospho-L-threonyl-[protein] + ADP + H(+). Its function is as follows. Protein kinase that plays a role in vesicle-mediated transport processes and exocytosis. Can phosphorylate CCNY at 'Ser-336' (in vitro). Plays a role in the regulation of insulin secretion in response to changes in blood glucose levels. Regulates GH1 release by brain neurons. Phosphorylates NSF, and thereby regulates NSF oligomerization. Required for normal spermatogenesis. Regulates neuron differentiation and dendrite development. In Mus musculus (Mouse), this protein is Cyclin-dependent kinase 16 (Cdk16).